The primary structure comprises 307 residues: Myeloid-associated differentiation marker-like protein 2 (307 aa).

2 MARVEL domains span residues 17-154 (AVTS…ARPG) and 159-303 (YMAT…RIRF). The next 7 helical transmembrane spans lie at 53-73 (FCMA…ACEF), 90-110 (AFAM…PLYF), 129-149 (LAAS…VALT), 163-183 (VSGL…GALV), 198-218 (VAVY…SVMG), 232-252 (IVYT…WPVF), and 278-298 (LVVA…LAYS).

It belongs to the MAL family.

Its subcellular location is the membrane. This Mus musculus (Mouse) protein is Myeloid-associated differentiation marker-like protein 2 (Myadml2).